We begin with the raw amino-acid sequence, 211 residues long: MNHTKSSFIKLALECQVLKFGEFTLKSGRISPYFFNAGLFYHGNSIRQLGQFYAKTLLEQEISFEHLFGPAYKGIPLATATAVALAELGRDITVTFNRKEVKTHGEGGQLIGSPLTGRTVIIDDVITAGTAFRESQTLIKENGGILRGVIIALDRCERGLTEKSTLSEIREQGIEVYSIINLFDLIEFLKNDNQYEQVQKLESYHELYGAY.

Lysine 26 is a 5-phospho-alpha-D-ribose 1-diphosphate binding site. An orotate-binding site is contributed by 34-35 (FF). Residues 72–73 (YK), arginine 98, lysine 99, lysine 102, histidine 104, and 123–131 (DDVITAGTA) contribute to the 5-phospho-alpha-D-ribose 1-diphosphate site. The orotate site is built by threonine 127 and arginine 155.

It belongs to the purine/pyrimidine phosphoribosyltransferase family. PyrE subfamily. As to quaternary structure, homodimer. Mg(2+) serves as cofactor.

It carries out the reaction orotidine 5'-phosphate + diphosphate = orotate + 5-phospho-alpha-D-ribose 1-diphosphate. Its pathway is pyrimidine metabolism; UMP biosynthesis via de novo pathway; UMP from orotate: step 1/2. Functionally, catalyzes the transfer of a ribosyl phosphate group from 5-phosphoribose 1-diphosphate to orotate, leading to the formation of orotidine monophosphate (OMP). This chain is Orotate phosphoribosyltransferase, found in Legionella pneumophila (strain Lens).